The chain runs to 293 residues: tRNA pseudouridine synthase B (293 aa).

Residue D39 is the Nucleophile of the active site.

This sequence belongs to the pseudouridine synthase TruB family. Type 1 subfamily.

The catalysed reaction is uridine(55) in tRNA = pseudouridine(55) in tRNA. Its function is as follows. Responsible for synthesis of pseudouridine from uracil-55 in the psi GC loop of transfer RNAs. The polypeptide is tRNA pseudouridine synthase B (Rickettsia bellii (strain OSU 85-389)).